The chain runs to 245 residues: Zinc finger protein 575 (245 aa).

A disordered region spans residues 1 to 67 (MLERGAESAA…PPQRPHRCPD (67 aa)). The segment covering 36 to 49 (PSQSAPGPTASAGS) has biased composition (low complexity). The segment covering 52–63 (RPRRRPPPQRPH) has biased composition (basic residues). 6 consecutive C2H2-type zinc fingers follow at residues 63-85 (HRCP…RLAH), 91-113 (HPCP…RLTH), 119-141 (HPCP…LWTH), 147-169 (YPCP…RHTH), 177-199 (YPCP…RLCH), and 213-240 (HRCS…QVEH).

It belongs to the krueppel C2H2-type zinc-finger protein family.

The protein resides in the nucleus. Functionally, may be involved in transcriptional regulation. This chain is Zinc finger protein 575 (ZNF575), found in Homo sapiens (Human).